The following is a 60-amino-acid chain: Large ribosomal subunit protein bL33 (60 aa).

It belongs to the bacterial ribosomal protein bL33 family.

The polypeptide is Large ribosomal subunit protein bL33 (Chlorobaculum tepidum (strain ATCC 49652 / DSM 12025 / NBRC 103806 / TLS) (Chlorobium tepidum)).